We begin with the raw amino-acid sequence, 182 residues long: Riboflavin kinase (182 aa).

Mg(2+)-binding residues include Thr39 and Asn41. Residue Glu117 is the Nucleophile of the active site.

This sequence belongs to the flavokinase family. Zn(2+) is required as a cofactor. Mg(2+) serves as cofactor.

It carries out the reaction riboflavin + ATP = FMN + ADP + H(+). It participates in cofactor biosynthesis; FMN biosynthesis; FMN from riboflavin (ATP route): step 1/1. In terms of biological role, catalyzes the phosphorylation of riboflavin (vitamin B2) to form flavin mononucleotide (FMN) coenzyme. The protein is Riboflavin kinase (FMN1) of Lodderomyces elongisporus (strain ATCC 11503 / CBS 2605 / JCM 1781 / NBRC 1676 / NRRL YB-4239) (Yeast).